The chain runs to 279 residues: Large ribosomal subunit protein mL46 (279 aa).

Residue lysine 230 is modified to N6-acetyllysine.

This sequence belongs to the mitochondrion-specific ribosomal protein mL46 family. In terms of assembly, component of the mitochondrial large ribosomal subunit (mt-LSU). Mature mammalian 55S mitochondrial ribosomes consist of a small (28S) and a large (39S) subunit. The 28S small subunit contains a 12S ribosomal RNA (12S mt-rRNA) and 30 different proteins. The 39S large subunit contains a 16S rRNA (16S mt-rRNA), a copy of mitochondrial valine transfer RNA (mt-tRNA(Val)), which plays an integral structural role, and 52 different proteins. mL46 is located at the central protuberance.

The protein resides in the mitochondrion. This is Large ribosomal subunit protein mL46 (MRPL46) from Homo sapiens (Human).